Here is a 218-residue protein sequence, read N- to C-terminus: Small ribosomal subunit protein uS3c (218 aa).

The KH type-2 domain maps to 43–118 (IKNYVQKNMR…KLNIAITRIA (76 aa)).

The protein belongs to the universal ribosomal protein uS3 family. Part of the 30S ribosomal subunit.

Its subcellular location is the plastid. The protein resides in the chloroplast. In Buxus microphylla (Littleleaf boxwood), this protein is Small ribosomal subunit protein uS3c (rps3).